The following is a 437-amino-acid chain: Peptidyl-prolyl cis-trans isomerase CYP38, chloroplastic (437 aa).

Residues 1-36 constitute a chloroplast transit peptide; sequence MAAAFASLPTFSVVNSSRFPRRRIGFSCSKKPLEVR. The transit peptide at 37 to 92 directs the protein to the thylakoid; that stretch reads CSSGNTRYTKQRGAFTSLKECAISLALSVGLMVSVPSIALPPNAHAVANPVIPDVS. The region spanning 245–437 is the PPIase cyclophilin-type domain; it reads VKIKDNPNIE…LANPSYKIAG (193 aa).

Ubiquitous. Lower levels of expression in roots.

It localises to the plastid. Its subcellular location is the chloroplast thylakoid lumen. The enzyme catalyses [protein]-peptidylproline (omega=180) = [protein]-peptidylproline (omega=0). In terms of biological role, required for the assembly and stabilization of PSII, but has no PPIases activity. The sequence is that of Peptidyl-prolyl cis-trans isomerase CYP38, chloroplastic (CYP38) from Arabidopsis thaliana (Mouse-ear cress).